Consider the following 290-residue polypeptide: Shikimate dehydrogenase (NADP(+)) (290 aa).

Shikimate contacts are provided by residues 22–24 (SLS) and threonine 68. Lysine 72 functions as the Proton acceptor in the catalytic mechanism. Aspartate 84 contributes to the NADP(+) binding site. Shikimate-binding residues include asparagine 93 and aspartate 108. NADP(+)-binding positions include 133-137 (GSGGS) and isoleucine 228. Tyrosine 230 contacts shikimate. Glycine 251 contributes to the NADP(+) binding site.

The protein belongs to the shikimate dehydrogenase family. In terms of assembly, homodimer.

It catalyses the reaction shikimate + NADP(+) = 3-dehydroshikimate + NADPH + H(+). Its pathway is metabolic intermediate biosynthesis; chorismate biosynthesis; chorismate from D-erythrose 4-phosphate and phosphoenolpyruvate: step 4/7. In terms of biological role, involved in the biosynthesis of the chorismate, which leads to the biosynthesis of aromatic amino acids. Catalyzes the reversible NADPH linked reduction of 3-dehydroshikimate (DHSA) to yield shikimate (SA). This is Shikimate dehydrogenase (NADP(+)) from Leptospira interrogans serogroup Icterohaemorrhagiae serovar Lai (strain 56601).